Consider the following 30-residue polypeptide: GSAIACGESCFKFKCYTPGCSCSYPICKKD.

Positions 1 to 30 (GSAIACGESCFKFKCYTPGCSCSYPICKKD) form a cross-link, cyclopeptide (Gly-Asp). 3 cysteine pairs are disulfide-bonded: cysteine 6/cysteine 20, cysteine 10/cysteine 22, and cysteine 15/cysteine 27.

This is a cyclic peptide. Post-translationally, contains 3 disulfide bonds.

Its function is as follows. Probably participates in a plant defense mechanism (Potential). Binds to and induces leakage in phospholipd membranes, particularly ones containing 1-palmitoyl-2-oleophosphatidylethanolamine (POPE). This is Cyclotide mela-5 from Melicytus latifolius (Norfolk Island mahoe).